A 61-amino-acid chain; its full sequence is MSIVQSYITDEKGNIKGVILDYKTFKKIEELLLDYGLLKAMEEVENEEEIDLETAKKLLEQ.

Its function is as follows. Antitoxin component of a type II toxin-antitoxin (TA) system. Its cognate toxin is RelE2 (Potential). In Methanocaldococcus jannaschii (strain ATCC 43067 / DSM 2661 / JAL-1 / JCM 10045 / NBRC 100440) (Methanococcus jannaschii), this protein is Putative antitoxin RelB2 (relB2).